We begin with the raw amino-acid sequence, 681 residues long: Oligopeptidase A (681 aa).

Position 470 (histidine 470) interacts with Zn(2+). Glutamate 471 is an active-site residue. The Zn(2+) site is built by histidine 474 and histidine 477.

The protein belongs to the peptidase M3 family. Zn(2+) serves as cofactor.

The catalysed reaction is Hydrolysis of oligopeptides, with broad specificity. Gly or Ala commonly occur as P1 or P1' residues, but more distant residues are also important, as is shown by the fact that Z-Gly-Pro-Gly-|-Gly-Pro-Ala is cleaved, but not Z-(Gly)(5).. Its function is as follows. May play a specific role in the degradation of signal peptides after they are released from precursor forms of secreted proteins. Can cleave N-acetyl-L-Ala(4). The protein is Oligopeptidase A (prlC) of Haemophilus influenzae (strain ATCC 51907 / DSM 11121 / KW20 / Rd).